We begin with the raw amino-acid sequence, 267 residues long: Putative B3 domain-containing protein LOC_Os07g12820 (267 aa).

Positions 4–99 (PTFSMVKIKT…RLNVIIFNKE (96 aa)) form a DNA-binding region, TF-B3.

The protein resides in the nucleus. The sequence is that of Putative B3 domain-containing protein LOC_Os07g12820 from Oryza sativa subsp. japonica (Rice).